The chain runs to 156 residues: Protein FAM162A (156 aa).

The tract at residues T37 to S57 is disordered. Residues R78–K104 are required for proapoptotic activity. Residues I105–I122 traverse the membrane as a helical segment.

Belongs to the UPF0389 family. In terms of assembly, interacts with HSP90AB1; HSP90AB1 is essential for FAM162A mitochondrial localization and pro-apoptotic activity. Interacts with VDAC2; the interaction is probably involved in inducing mitochondrial permeability transition.

The protein localises to the mitochondrion membrane. Functionally, proposed to be involved in regulation of apoptosis; the exact mechanism may differ between cell types/tissues. May be involved in hypoxia-induced cell death of transformed cells implicating cytochrome C release and caspase activation (such as CASP9) and inducing mitochondrial permeability transition. May be involved in hypoxia-induced cell death of neuronal cells probably by promoting release of AIFM1 from mitochondria to cytoplasm and its translocation to the nucleus; however, the involvement of caspases has been reported conflictingly. The protein is Protein FAM162A (FAM162A) of Bos taurus (Bovine).